Here is a 146-residue protein sequence, read N- to C-terminus: uncharacterized protein (146 aa).

A signal peptide spans M1–S24. N-linked (GlcNAc...) asparagine glycosylation is found at N99 and N106.

This is an uncharacterized protein from Saccharomyces cerevisiae (strain ATCC 204508 / S288c) (Baker's yeast).